The chain runs to 357 residues: DNA primase small subunit PriS (357 aa).

Residues Asp-105, Asp-107, and Asp-259 contribute to the active site.

This sequence belongs to the eukaryotic-type primase small subunit family. As to quaternary structure, heterodimer of a small subunit (PriS) and a large subunit (PriL). It depends on Mg(2+) as a cofactor. Mn(2+) is required as a cofactor.

Catalytic subunit of DNA primase, an RNA polymerase that catalyzes the synthesis of short RNA molecules used as primers for DNA polymerase during DNA replication. The small subunit contains the primase catalytic core and has DNA synthesis activity on its own. Binding to the large subunit stabilizes and modulates the activity, increasing the rate of DNA synthesis while decreasing the length of the DNA fragments, and conferring RNA synthesis capability. The DNA polymerase activity may enable DNA primase to also catalyze primer extension after primer synthesis. May also play a role in DNA repair. This is DNA primase small subunit PriS from Methanococcus maripaludis (strain DSM 14266 / JCM 13030 / NBRC 101832 / S2 / LL).